We begin with the raw amino-acid sequence, 284 residues long: MKLDGYTRLAAVVANPIKHSISPFIHNRAFEATDTNGAYVAWEIEASDLVETVANIRRYQMFGINLSMPYKEQVIPYLDKLSDEARLIGAVNTVVNENGNLIGYNTDGKGFFKCLPSFTISGKKMTLLGAGGAAKSILAQAILDGVSQISVFVRSVSMEKTRPYLDKLQEQTGFKVDLCALEYVSELQARIAESDLLVNATSVGMDGQSSPVPENIVLPETLLVADIIYQPFETPFLKWARSQGNPAVNGLGMLLYQAAEAFQLWTGKEMPTEEIWQSLTEKYQ.

Shikimate contacts are provided by residues 20–22 and Ser67; that span reads SIS. Lys71 acts as the Proton acceptor in catalysis. Asp83 contributes to the NADP(+) binding site. Positions 92 and 107 each coordinate shikimate. NADP(+) is bound by residues 129–133 and Ile227; that span reads GAGGA. Tyr229 is a binding site for shikimate. Residue Gly250 participates in NADP(+) binding.

It belongs to the shikimate dehydrogenase family. As to quaternary structure, homodimer.

It carries out the reaction shikimate + NADP(+) = 3-dehydroshikimate + NADPH + H(+). The protein operates within metabolic intermediate biosynthesis; chorismate biosynthesis; chorismate from D-erythrose 4-phosphate and phosphoenolpyruvate: step 4/7. In terms of biological role, involved in the biosynthesis of the chorismate, which leads to the biosynthesis of aromatic amino acids. Catalyzes the reversible NADPH linked reduction of 3-dehydroshikimate (DHSA) to yield shikimate (SA). This is Shikimate dehydrogenase (NADP(+)) from Streptococcus pneumoniae (strain P1031).